A 501-amino-acid polypeptide reads, in one-letter code: V-type proton ATPase subunit B 2 (501 aa).

Arg392 provides a ligand contact to ATP.

The protein belongs to the ATPase alpha/beta chains family. V-ATPase is a heteromultimeric enzyme made up of two complexes: the ATP-hydrolytic V1 complex and the proton translocation V0 complex. The V1 complex consists of three catalytic AB heterodimers that form a heterohexamer, three peripheral stalks each consisting of EG heterodimers, one central rotor including subunits D and F, and the regulatory subunits C and H. The proton translocation complex V0 consists of the proton transport subunit a, a ring of proteolipid subunits c9c'', rotary subunit d, subunits e and f, and the accessory subunits vah-19/Ac45 and vah-20/PRR. In terms of tissue distribution, predominantly expressed in male and hermaphrodite testis (at protein level).

It localises to the cytoplasm. In terms of biological role, non-catalytic subunit of the V1 complex of vacuolar(H+)-ATPase (V-ATPase), a multisubunit enzyme composed of a peripheral complex (V1) that hydrolyzes ATP and a membrane integral complex (V0) that translocates protons. V-ATPase is responsible for acidifying and maintaining the pH of intracellular compartments and in some cell types, is targeted to the plasma membrane, where it is responsible for acidifying the extracellular environment. In neurons, required for necrotic cell death probably by promoting intracellular acidification. Required for spermatogenesis where it regulates the fibrous body-membranous organelle (FBMO) morphology in spermatocytes and the acidification of FBMO-derived secretory membranous organelles (MOs) as spermatids mature. The chain is V-type proton ATPase subunit B 2 from Caenorhabditis elegans.